The sequence spans 1322 residues: Serine/threonine-protein phosphatase UIS2 (1322 aa).

A signal peptide spans 1-22; that stretch reads MNISKFFLIFIPLVLFKYPANN. Residues 1–535 form an interaction with phosphorylated eIF2alpha region; that stretch reads MNISKFFLIF…NELKSTSNAM (535 aa). Composition is skewed to basic and acidic residues over residues 267–279 and 288–326; these read EKSAEKYEDKELN and NSKKEQTGNDNVSETKMHKEESSDSSNKTDESNVCKSEN. Disordered regions lie at residues 267–326, 613–646, 1066–1087, and 1170–1196; these read EKSA…KSEN, NTNTDDKNQHNDISTTPINNYTDGNEGNNNSENN, NETPHNSNEILNTNENESIQPN, and EVPDESKEDDNTNSQPEDTIDQENKDD. Residues 631–646 are compositionally biased toward low complexity; the sequence is NNYTDGNEGNNNSENN.

Mn(2+) is required as a cofactor.

It carries out the reaction O-phospho-L-seryl-[protein] + H2O = L-seryl-[protein] + phosphate. Its function is as follows. Protein phosphatase which dephosphorylates 'Ser-59' of translation factor eIF2alpha during the liver stage, thus enabling protein translation. This is Serine/threonine-protein phosphatase UIS2 from Plasmodium berghei (strain Anka).